The chain runs to 480 residues: Glutamyl-tRNA(Gln) amidotransferase subunit A (480 aa).

Active-site charge relay system residues include Lys-79 and Ser-154. Residues 133–156 are disordered; it reads NENSAYGPVRNPRDKSRVPGGSSG. Ser-178 functions as the Acyl-ester intermediate in the catalytic mechanism.

This sequence belongs to the amidase family. GatA subfamily. Heterotrimer of A, B and C subunits.

The enzyme catalyses L-glutamyl-tRNA(Gln) + L-glutamine + ATP + H2O = L-glutaminyl-tRNA(Gln) + L-glutamate + ADP + phosphate + H(+). Functionally, allows the formation of correctly charged Gln-tRNA(Gln) through the transamidation of misacylated Glu-tRNA(Gln) in organisms which lack glutaminyl-tRNA synthetase. The reaction takes place in the presence of glutamine and ATP through an activated gamma-phospho-Glu-tRNA(Gln). This is Glutamyl-tRNA(Gln) amidotransferase subunit A from Koribacter versatilis (strain Ellin345).